A 638-amino-acid polypeptide reads, in one-letter code: 1-deoxy-D-xylulose-5-phosphate synthase (638 aa).

Residues histidine 79 and glycine 120 to serine 122 contribute to the thiamine diphosphate site. A Mg(2+)-binding site is contributed by aspartate 151. Residues glycine 152–alanine 153, asparagine 182, tyrosine 291, and glutamate 373 contribute to the thiamine diphosphate site. Asparagine 182 provides a ligand contact to Mg(2+).

Belongs to the transketolase family. DXPS subfamily. In terms of assembly, homodimer. Mg(2+) serves as cofactor. The cofactor is thiamine diphosphate.

The catalysed reaction is D-glyceraldehyde 3-phosphate + pyruvate + H(+) = 1-deoxy-D-xylulose 5-phosphate + CO2. Its pathway is metabolic intermediate biosynthesis; 1-deoxy-D-xylulose 5-phosphate biosynthesis; 1-deoxy-D-xylulose 5-phosphate from D-glyceraldehyde 3-phosphate and pyruvate: step 1/1. Its function is as follows. Catalyzes the acyloin condensation reaction between C atoms 2 and 3 of pyruvate and glyceraldehyde 3-phosphate to yield 1-deoxy-D-xylulose-5-phosphate (DXP). This Xanthomonas euvesicatoria pv. vesicatoria (strain 85-10) (Xanthomonas campestris pv. vesicatoria) protein is 1-deoxy-D-xylulose-5-phosphate synthase.